The primary structure comprises 147 residues: Hemoglobin subunit epsilon (147 aa).

The Globin domain occupies 3–147; it reads HFTAEEKAAV…VAIALAHKYH (145 aa). Phosphoserine occurs at positions 14 and 51. H64 and H93 together coordinate heme b.

This sequence belongs to the globin family. As to quaternary structure, heterotetramer of two alpha chains and two epsilon chains in early embryonic hemoglobin Gower-2; two zeta chains and two epsilon chains in early embryonic hemoglobin Gower-1. Red blood cells.

Functionally, the epsilon chain is a beta-type chain of early mammalian embryonic hemoglobin. This is Hemoglobin subunit epsilon (HBE1) from Symphalangus syndactylus (Siamang).